We begin with the raw amino-acid sequence, 277 residues long: Small ribosomal subunit protein uS2 (277 aa).

Residues 255–277 form a disordered region; sequence AVATTDEASAPSAAATETTTEEG. The span at 257 to 277 shows a compositional bias: low complexity; it reads ATTDEASAPSAAATETTTEEG.

This sequence belongs to the universal ribosomal protein uS2 family.

The chain is Small ribosomal subunit protein uS2 from Mycobacteroides abscessus (strain ATCC 19977 / DSM 44196 / CCUG 20993 / CIP 104536 / JCM 13569 / NCTC 13031 / TMC 1543 / L948) (Mycobacterium abscessus).